A 374-amino-acid polypeptide reads, in one-letter code: Speckle-type POZ protein B (374 aa).

One can recognise an MATH domain in the interval 31 to 161 (KFSYMWTINN…DDKLTLFCEV (131 aa)). Residues 71–191 (VNPKGLDEES…PECRLSDELG (121 aa)) are required for nuclear localization. Positions 173–297 (QNTMNMVKVP…MCEEALCSNL (125 aa)) constitute a BTB domain. The segment at 297–355 (LSVENAAEILILADLHSADQLKTQAVDFINYHASDVMETSGWKSMVVSHPHLVAEAYRS) is homodimerization.

It belongs to the Tdpoz family. Homodimer. Part of cullin-RING-based BCR (BTB-CUL3-RBX1) E3 ubiquitin-protein ligase complexes that contain CUL3 and SPOP, plus a target protein.

It localises to the nucleus. The protein localises to the nucleus speckle. It functions in the pathway protein modification; protein ubiquitination. Component of a cullin-RING-based BCR (BTB-CUL3-RBX1) E3 ubiquitin-protein ligase complex that mediates the ubiquitination of target proteins, leading most often to their proteasomal degradation. This chain is Speckle-type POZ protein B (spop-b), found in Xenopus laevis (African clawed frog).